The following is a 342-amino-acid chain: Nuclear distribution protein nudE homolog 1 (342 aa).

Residues 45-189 (REYEAELETQ…ELAVQQKQEK (145 aa)) are a coiled coil. The segment at 89–157 (EWYRQVSALE…ERNAFLESEL (69 aa)) is interaction with PAFAH1B1. Disordered regions lie at residues 182-203 (AVQQ…TERT) and 320-342 (GTRP…KMLL). Over residues 322-342 (RPSSTPGPMSHPSQSVVKMLL) the composition is skewed to polar residues.

This sequence belongs to the nudE family. In terms of assembly, self-associates. Interacts with PAFAH1B1. Phosphorylated in mitosis.

It localises to the cytoplasm. It is found in the cytoskeleton. Its subcellular location is the microtubule organizing center. The protein localises to the centrosome. The protein resides in the spindle. It localises to the chromosome. It is found in the centromere. Its subcellular location is the kinetochore. The protein localises to the cleavage furrow. The protein resides in the cytoplasmic vesicle membrane. Required for centrosome duplication and formation and function of the mitotic spindle. The protein is Nuclear distribution protein nudE homolog 1 (NDE1) of Gallus gallus (Chicken).